A 1648-amino-acid chain; its full sequence is MSDDPAFLALGTEVSAKFKGAYCEAKIQKVDRSLKVKVSLKESPFGQMIVQDNDLPNAKFEINELTDVVFQRKFIRCQIQSIKDQSKYHVVFNDGDEKELRRTQLVLKGGKHFAADGNLDSMPLTNPESFSTPVIRGAAKRGAQKIRNAISEASGSRGGAVLLHNDDDENDEEDQEDGENEEDADDDDDDTEEQQQPRERRRAAAISAIGVLKKAIEDTQSEESSADSSEERERARSRRKRKDEASSAVTSDEEDQEDLATTDSENPVINGASSAAALSKTLQRKLEKQAMKREKQRLKEEEREEKLRLKEENREKKRREKARIMELKRLEKVYRTSNARIQENHEKSMTQIISHRSVRYFARFSDLKHRRKKKKLYLHEHRQKVNSRIRNVKLYFAWRFVAHKARLSYFARYALQWWRTSEDQAYSLIRTEKLLRSQRRRDWVGSWLEGLEREKIRFVVIHESYTQARRILKYIERGTEKRTFAERCDIEYEDIESSTVSSHFRDQEWFPAVLFPQVFSDENGSEGRQRIVRHMGNGQLVQVWEDDLVPFDWLPEYSFADVTAMTEKKPVEMRRKFKLAWRFATDYAQNRLDARSIRSILEWKFIRPSSRRLKITPIPVQAPSPNRCGEDHDDLVSTPNESDYDSDATIKNVDAETKDLFVAMLVQFHDAHNSVIDTNPTIQGHEVDLYYLYELAKKTGGPKKVYAANLWSDYAKKLVPAATDAEEELKTIFKNFLESYLAINTKLSWPMESLQPRTERKVVLPGQYSESRKKRTQAIMSQVQTPPTAPGSSKKGRVGSGGTRGRKRKVSSESVQLKKRNRKSSSRATTASPGPSEDRFSFQRPQDSDDVTDVPDDMTDHEDLLPEAATRKKYERKSQTPGRRSLSSRRDDTTPVSSMAAAPPKKGRPRKNTTVTTPVLSVPKSEGRGPRKEDTTTKFVRANVLSHILSGQKLRAFYGDEWFRANAIEDATDCTDEIMDIMLAHQDFFTPDTPRLSPSAIQDLDKVLKKIRAKTHYTGWNQRYDEFMKLEKLMVTVEDQMIARGRFRHLPRGRELKAETLALVEKHFRADDEDDGVPKTLAFYLKIAQEALSLSEKRAVADDDESSDSDTDFEQKPDTSAAAAVNGGKSESEEEEEEKTVVMGGDEEAEEEVKSEDVLVESVDQESPPTTSQGTTTPETAATGGLESESDEPEYPPVPEELVPPPPVLLENFPSTDRFSSGGSSNYPTLSRQGSINSMASPMFSPNSDLSLSGPLTLPRSGPLTMANIRQSPTPDEVVGSLRKRLSQTSESSESSELPPPPSAASKSKRIRRASERSIDSASEHHRMMRSPRILTTQHSSGALIFDISTTQPTDTSGPIEALSVRKPGRRKTVFAASPTLLTSGPLTLSSSAPPPPPASPAPPQHAQKTLGRPRKTPSTSSRKPEEEDEAEQIPTTVVGVTEEASVADSSAKEDLTSEDGSATPQDEKDDSESTTTTDTITPKSIRGGKRRRGGGRFGGSYPVKPAKPGRKPKDPHAEEGADEKDPEDQTPTTMTTSTPTRADSFQTQKNRMAKLMEGKPHDYSFLDLPDFDKIIEEAPKEDINILMEERTYELREIFAQCKADLSALEKRYRQQNEAKRKAEFAAKTASSAAAAQASSSTCSTPRP.

Disordered stretches follow at residues 150–270 (ISEA…PVIN) and 284–307 (RKLEKQAMKREKQRLKEEEREEKL). 3 stretches are compositionally biased toward acidic residues: residues 166–193 (DDDENDEEDQEDGENEEDADDDDDDTEE), 219–228 (TQSEESSADS), and 251–260 (SDEEDQEDLA). The segment covering 261–270 (TTDSENPVIN) has biased composition (polar residues). The 91-residue stretch at 655-745 (AETKDLFVAM…FLESYLAINT (91 aa)) folds into the ARID domain. 3 disordered regions span residues 763 to 935 (VLPG…KEDT), 1095 to 1563 (SEKR…KPHD), and 1628 to 1648 (KTASSAAAAQASSSTCSTPRP). The span at 848-860 (SDDVTDVPDDMTD) shows a compositional bias: acidic residues. Composition is skewed to basic and acidic residues over residues 861–878 (HEDLLPEAATRKKYERKS) and 925–935 (SEGRGPRKEDT). 2 stretches are compositionally biased toward acidic residues: residues 1102–1112 (DDDESSDSDTD) and 1145–1154 (GDEEAEEEVK). A compositionally biased stretch (low complexity) spans 1165–1185 (QESPPTTSQGTTTPETAATGG). The span at 1195-1208 (YPPVPEELVPPPPV) shows a compositional bias: pro residues. Positions 1213–1251 (FPSTDRFSSGGSSNYPTLSRQGSINSMASPMFSPNSDLS) are enriched in polar residues. A compositionally biased stretch (basic and acidic residues) spans 1313 to 1326 (RASERSIDSASEHH). Residues 1348–1357 (ISTTQPTDTS) show a composition bias toward polar residues. Residues 1377–1392 (ASPTLLTSGPLTLSSS) show a composition bias toward low complexity. Pro residues predominate over residues 1393 to 1404 (APPPPPASPAPP). Composition is skewed to low complexity over residues 1474–1486 (STTTTDTITPKSI) and 1531–1541 (TPTTMTTSTPT). The segment covering 1542-1551 (RADSFQTQKN) has biased composition (polar residues).

Its subcellular location is the nucleus. Functionally, DNA-binding protein which modulates activity of several transcription factors. Plays a role in the modulation of endoplasmic reticulum (ER) homeostasis during chemical and pathogen stress, including exposure to the Gram-negative bacterium P.aeruginosa. The protein is AT-rich interactive domain-containing protein arid-1 of Caenorhabditis elegans.